A 134-amino-acid polypeptide reads, in one-letter code: Small ribosomal subunit protein bS6 (134 aa).

The tract at residues 99 to 134 (PSQLAKSADEKRARKAPRSENFDNDQDDESNDDSDE) is disordered. Residues 105-119 (SADEKRARKAPRSEN) show a composition bias toward basic and acidic residues. Residues 120-134 (FDNDQDDESNDDSDE) are compositionally biased toward acidic residues.

It belongs to the bacterial ribosomal protein bS6 family.

Its function is as follows. Binds together with bS18 to 16S ribosomal RNA. The chain is Small ribosomal subunit protein bS6 from Psychrobacter sp. (strain PRwf-1).